Here is a 408-residue protein sequence, read N- to C-terminus: Arginine biosynthesis bifunctional protein ArgJ (408 aa).

6 residues coordinate substrate: Thr-156, Lys-182, Thr-193, Glu-279, Asn-403, and Ser-408. The Nucleophile role is filled by Thr-193.

The protein belongs to the ArgJ family. In terms of assembly, heterotetramer of two alpha and two beta chains.

It is found in the cytoplasm. The catalysed reaction is N(2)-acetyl-L-ornithine + L-glutamate = N-acetyl-L-glutamate + L-ornithine. It carries out the reaction L-glutamate + acetyl-CoA = N-acetyl-L-glutamate + CoA + H(+). It participates in amino-acid biosynthesis; L-arginine biosynthesis; L-ornithine and N-acetyl-L-glutamate from L-glutamate and N(2)-acetyl-L-ornithine (cyclic): step 1/1. The protein operates within amino-acid biosynthesis; L-arginine biosynthesis; N(2)-acetyl-L-ornithine from L-glutamate: step 1/4. Its function is as follows. Catalyzes two activities which are involved in the cyclic version of arginine biosynthesis: the synthesis of N-acetylglutamate from glutamate and acetyl-CoA as the acetyl donor, and of ornithine by transacetylation between N(2)-acetylornithine and glutamate. The protein is Arginine biosynthesis bifunctional protein ArgJ of Bordetella bronchiseptica (strain ATCC BAA-588 / NCTC 13252 / RB50) (Alcaligenes bronchisepticus).